The chain runs to 147 residues: Sentan (147 aa).

The tract at residues 1–32 is disordered; the sequence is MGGCMHSTQDKSLHLEGDPNPSAAPTSTCAPR. Positions 8–17 are enriched in basic and acidic residues; that stretch reads TQDKSLHLEG.

The protein belongs to the S-100 family.

Its subcellular location is the cell projection. It localises to the cilium. Functionally, may be a component of the linker structure that bridges the ciliary membrane and peripheral singlet microtubules. This Homo sapiens (Human) protein is Sentan (SNTN).